Here is a 367-residue protein sequence, read N- to C-terminus: Flagellar P-ring protein (367 aa).

A signal peptide spans 1–22; that stretch reads MRRMLVIRWILAIHLIATQVFA.

This sequence belongs to the FlgI family. As to quaternary structure, the basal body constitutes a major portion of the flagellar organelle and consists of four rings (L,P,S, and M) mounted on a central rod.

The protein localises to the periplasm. It localises to the bacterial flagellum basal body. Functionally, assembles around the rod to form the L-ring and probably protects the motor/basal body from shearing forces during rotation. The polypeptide is Flagellar P-ring protein (Legionella pneumophila (strain Corby)).